The sequence spans 391 residues: Secreted aspartic protease 1 (391 aa).

The first 18 residues, 1-18, serve as a signal peptide directing secretion; it reads MFLKNIFIALAIALLVDA. A propeptide spans 19 to 50 (activation peptide); the sequence is SPAKRSPGFVTLDFDVIKTPVNATGQEGKVKR. Asn40 carries N-linked (GlcNAc...) asparagine glycosylation. Residues 64–377 form the Peptidase A1 domain; it reads YAADITIGSN…DLDDDKISLA (314 aa). Residue Asp82 is part of the active site. 82–84 provides a ligand contact to pepstatin A; that stretch reads DTG. A disulfide bond links Cys97 and Cys109. Residues Asp241 and Asp263 each coordinate Zn(2+). Asp267 is an active-site residue. 267–271 contributes to the pepstatin A binding site; it reads DSGTT. Cys305 and Cys343 form a disulfide bridge.

It belongs to the peptidase A1 family. As to quaternary structure, monomer.

Its subcellular location is the secreted. It catalyses the reaction Preferential cleavage at the carboxyl of hydrophobic amino acids, but fails to cleave 15-Leu-|-Tyr-16, 16-Tyr-|-Leu-17 and 24-Phe-|-Phe-25 of insulin B chain. Activates trypsinogen, and degrades keratin.. Inhibited by pepstatin A analogs and squash aspartic peptidase inhibitor (SQAPI). Secreted aspartic peptidases (SAPs) are a group of ten acidic hydrolases considered as key virulence factors. These enzymes supply the fungus with nutrient amino acids as well as are able to degrade the selected host's proteins involved in the immune defense. Induces host inflammatory cytokine production in a proteolytic activity-independent way. Plays a role in tissue damage during superficial infection. Moreover, acts toward human hemoglobin though limited proteolysis to generate a variety of antimicrobial hemocidins, enabling to compete with the other microorganisms of the same physiological niche using the microbicidal peptides generated from the host protein. Its function is as follows. Plays a key role in defense against host by cleaving histatin-5 (Hst 5), a peptide from human saliva that carries out fungicidal activity. The cleavage rate decreases in an order of SAP2 &gt; SAP9 &gt; SAP3 &gt; SAP7 &gt; SAP4 &gt; SAP1 &gt; SAP8. The first cleavage occurs between residues 'Lys-17' and 'His-18' of Hst 5, giving DSHAKRHHGYKRKFHEK and HHSHRGY peptides. Further fragmentation by SAP1 results in AKRHHGYKRKFHEK and AKRHHGY products. This Candida albicans (Yeast) protein is Secreted aspartic protease 1.